A 420-amino-acid chain; its full sequence is Phosphoglycerate kinase (420 aa).

(2R)-3-phosphoglycerate contacts are provided by V24, D25, F26, N27, R40, S63, H64, G66, R67, L122, R123, H170, and R171. G214 is a binding site for ADP. Position 214 (G214) interacts with CDP. Residues A215 and K216 each coordinate AMP. Residue A215 participates in ATP binding. A215 is a binding site for Mg(2+). A CDP-binding site is contributed by D219. Residue D219 participates in Mg(2+) binding. K220 contacts AMP. Residue K220 participates in ATP binding. ADP is bound at residue G238. Residue G238 coordinates CDP. The AMP site is built by G239 and G313. ATP contacts are provided by G239 and G313. The CDP site is built by G338 and F343. F343 contacts ADP. AMP is bound at residue E344. Residues E344, D375, and T376 each contribute to the ATP site. D375 contributes to the Mg(2+) binding site.

It belongs to the phosphoglycerate kinase family. As to quaternary structure, monomer. Requires Mg(2+) as cofactor.

It carries out the reaction (2R)-3-phosphoglycerate + ATP = (2R)-3-phospho-glyceroyl phosphate + ADP. The protein operates within carbohydrate degradation; glycolysis; pyruvate from D-glyceraldehyde 3-phosphate: step 2/5. This Tetrahymena thermophila protein is Phosphoglycerate kinase (PGK).